Here is a 256-residue protein sequence, read N- to C-terminus: PHD finger protein ALFIN-LIKE 4 (256 aa).

Positions 149–195 (QSKTANGSSKNKSGSKPPKRPNSDSKPQKQVQAKYEEENGGRGNGGD) are disordered. Residues 154–164 (NGSSKNKSGSK) show a composition bias toward low complexity. A PHD-type zinc finger spans residues 200 to 252 (ETICGACGEAYANGEFWICCDICETWFHGKCVRITPAKAEHIKHYKCPGCSNK).

It belongs to the Alfin family. In terms of assembly, interacts with H3K4me3 and to a lesser extent with H3K4me2.

The protein localises to the nucleus. In terms of biological role, histone-binding component that specifically recognizes H3 tails trimethylated on 'Lys-4' (H3K4me3), which mark transcription start sites of virtually all active genes. The sequence is that of PHD finger protein ALFIN-LIKE 4 from Oryza sativa subsp. indica (Rice).